We begin with the raw amino-acid sequence, 63 residues long: Large ribosomal subunit protein bL28 (63 aa).

Belongs to the bacterial ribosomal protein bL28 family.

This Kosmotoga olearia (strain ATCC BAA-1733 / DSM 21960 / TBF 19.5.1) protein is Large ribosomal subunit protein bL28.